The following is a 281-amino-acid chain: uncharacterized protein (281 aa).

This is an uncharacterized protein from Mycoplasma pneumoniae (strain ATCC 29342 / M129 / Subtype 1) (Mycoplasmoides pneumoniae).